Reading from the N-terminus, the 608-residue chain is ESX-3 secretion system protein EccA3 (608 aa).

Positions 284–303 (EARSDPWDPETEPSEAEFVD) are disordered. Residues 290-301 (WDPETEPSEAEF) are compositionally biased toward acidic residues. 365–372 (GPPGTGKT) is an ATP binding site.

This sequence belongs to the CbxX/CfxQ family. In terms of assembly, part of the ESX-3 / type VII secretion system (T7SS), which is composed of cytosolic and membrane components.

The protein localises to the cytoplasm. Part of the ESX-3 specialized secretion system, which is required for siderophore-mediated iron acquisition and for the secretion of EsxH and EsxG. EccA3 exhibits ATPase activity and may provide energy for the export of ESX-3 substrates. The chain is ESX-3 secretion system protein EccA3 from Mycolicibacterium smegmatis (strain ATCC 700084 / mc(2)155) (Mycobacterium smegmatis).